Consider the following 212-residue polypeptide: Ribonuclease HII (212 aa).

Positions 2-206 (TPLVGVDEAG…CERIRAEAEQ (205 aa)) constitute an RNase H type-2 domain. A divalent metal cation-binding residues include Asp-8, Glu-9, and Asp-101.

The protein belongs to the RNase HII family. The cofactor is Mn(2+). Mg(2+) is required as a cofactor.

The protein localises to the cytoplasm. The enzyme catalyses Endonucleolytic cleavage to 5'-phosphomonoester.. Functionally, endonuclease that specifically degrades the RNA of RNA-DNA hybrids. The protein is Ribonuclease HII of Natronomonas pharaonis (strain ATCC 35678 / DSM 2160 / CIP 103997 / JCM 8858 / NBRC 14720 / NCIMB 2260 / Gabara) (Halobacterium pharaonis).